The chain runs to 396 residues: Obg-like ATPase 1 (396 aa).

The OBG-type G domain maps to 23–283; that stretch reads LKIGIVGLPN…LSAEERQKYL (261 aa). 32–37 contacts ATP; the sequence is NVGKST. Residues S36 and T56 each contribute to the Mg(2+) site. L231 provides a ligand contact to ATP. The Nuclear export signal motif lies at 267–274; the sequence is LELRLQEL. K294 carries the post-translational modification N6-acetyllysine. In terms of domain architecture, TGS spans 304–387; that stretch reads QLEYFFTAGP…EDGDIIFFKF (84 aa).

Belongs to the TRAFAC class OBG-HflX-like GTPase superfamily. OBG GTPase family. YchF/OLA1 subfamily. As to quaternary structure, monomer. The cofactor is Mg(2+).

The protein localises to the cytoplasm. The protein resides in the nucleus. It is found in the nucleolus. In terms of biological role, hydrolyzes ATP, and can also hydrolyze GTP with lower efficiency. Has lower affinity for GTP. This is Obg-like ATPase 1 from Bos taurus (Bovine).